A 149-amino-acid chain; its full sequence is Nucleoside diphosphate kinase (149 aa).

Lys9, Phe57, Arg85, Thr91, Arg102, and Asn112 together coordinate ATP. Residue His115 is the Pros-phosphohistidine intermediate of the active site.

This sequence belongs to the NDK family. As to quaternary structure, homotetramer. It depends on Mg(2+) as a cofactor.

It localises to the cytoplasm. It carries out the reaction dZDP + ATP = dZTP + ADP. It catalyses the reaction a 2'-deoxyribonucleoside 5'-diphosphate + ATP = a 2'-deoxyribonucleoside 5'-triphosphate + ADP. The enzyme catalyses a ribonucleoside 5'-diphosphate + ATP = a ribonucleoside 5'-triphosphate + ADP. Its pathway is purine metabolism. Functionally, major role in the synthesis of nucleoside triphosphates other than ATP. The ATP gamma phosphate is transferred to the NDP beta phosphate via a ping-pong mechanism, using a phosphorylated active-site intermediate. Its function is as follows. (Microbial infection) Catalyzes the phosphorylation of dZDP to dZTP, when the bacterium is infected by a phage that produces the substrate for the synthesis of dZTP (2- amino-2'-deoxyadenosine 5'-triphosphate), which is then used by the phage as a DNA polymerase substrate. This chain is Nucleoside diphosphate kinase, found in Synechococcus elongatus (strain ATCC 33912 / PCC 7942 / FACHB-805) (Anacystis nidulans R2).